Reading from the N-terminus, the 422-residue chain is uncharacterized protein (422 aa).

Disordered stretches follow at residues Met1–Asp21, Thr158–Val218, and Asp246–Thr271. A compositionally biased stretch (polar residues) spans Ala11–Asp21. Over residues Ser170–Ala199 the composition is skewed to low complexity. Composition is skewed to polar residues over residues Gly205–Glu216 and Ala250–Gly261. The span at Thr262–Thr271 shows a compositional bias: low complexity.

It belongs to the adhesin P1 family.

This is an uncharacterized protein from Mycoplasma pneumoniae (strain ATCC 29342 / M129 / Subtype 1) (Mycoplasmoides pneumoniae).